The primary structure comprises 274 residues: 3-methyl-2-oxobutanoate hydroxymethyltransferase (274 aa).

2 residues coordinate Mg(2+): D54 and D93. 3-methyl-2-oxobutanoate-binding positions include D54 to S55, D93, and K121. Position 123 (E123) interacts with Mg(2+). The Proton acceptor role is filled by E190.

The protein belongs to the PanB family. Homodecamer; pentamer of dimers. The cofactor is Mg(2+).

It localises to the cytoplasm. It carries out the reaction 3-methyl-2-oxobutanoate + (6R)-5,10-methylene-5,6,7,8-tetrahydrofolate + H2O = 2-dehydropantoate + (6S)-5,6,7,8-tetrahydrofolate. It participates in cofactor biosynthesis; (R)-pantothenate biosynthesis; (R)-pantoate from 3-methyl-2-oxobutanoate: step 1/2. Its function is as follows. Catalyzes the reversible reaction in which hydroxymethyl group from 5,10-methylenetetrahydrofolate is transferred onto alpha-ketoisovalerate to form ketopantoate. The chain is 3-methyl-2-oxobutanoate hydroxymethyltransferase from Ralstonia nicotianae (strain ATCC BAA-1114 / GMI1000) (Ralstonia solanacearum).